The sequence spans 403 residues: Probable tRNA sulfurtransferase (403 aa).

The 106-residue stretch at 60-165 (QLAEERLKPI…KEGVFLSCRT (106 aa)) folds into the THUMP domain. ATP contacts are provided by residues 183–184 (ML), 208–209 (HF), Arg-265, Gly-287, and Gln-296.

It belongs to the ThiI family.

It is found in the cytoplasm. The enzyme catalyses [ThiI sulfur-carrier protein]-S-sulfanyl-L-cysteine + a uridine in tRNA + 2 reduced [2Fe-2S]-[ferredoxin] + ATP + H(+) = [ThiI sulfur-carrier protein]-L-cysteine + a 4-thiouridine in tRNA + 2 oxidized [2Fe-2S]-[ferredoxin] + AMP + diphosphate. It carries out the reaction [ThiS sulfur-carrier protein]-C-terminal Gly-Gly-AMP + S-sulfanyl-L-cysteinyl-[cysteine desulfurase] + AH2 = [ThiS sulfur-carrier protein]-C-terminal-Gly-aminoethanethioate + L-cysteinyl-[cysteine desulfurase] + A + AMP + 2 H(+). It functions in the pathway cofactor biosynthesis; thiamine diphosphate biosynthesis. In terms of biological role, catalyzes the ATP-dependent transfer of a sulfur to tRNA to produce 4-thiouridine in position 8 of tRNAs, which functions as a near-UV photosensor. Also catalyzes the transfer of sulfur to the sulfur carrier protein ThiS, forming ThiS-thiocarboxylate. This is a step in the synthesis of thiazole, in the thiamine biosynthesis pathway. The sulfur is donated as persulfide by IscS. This is Probable tRNA sulfurtransferase from Listeria monocytogenes serovar 1/2a (strain ATCC BAA-679 / EGD-e).